We begin with the raw amino-acid sequence, 39 residues long: Omega-actinopoditoxin-Mb1a (39 aa).

3 cysteine pairs are disulfide-bonded: C4–C19, C11–C30, and C18–C38.

Contains 3 disulfide bonds. In terms of tissue distribution, expressed by the venom gland.

It localises to the secreted. Potent inhibitor of insect, but not mammalian, voltage-gated calcium channels (Cav). This is Omega-actinopoditoxin-Mb1a from Missulena bradleyi (Eastern mouse spider).